Here is a 155-residue protein sequence, read N- to C-terminus: Small ribosomal subunit protein uS7c (155 aa).

The protein belongs to the universal ribosomal protein uS7 family. In terms of assembly, part of the 30S ribosomal subunit.

Its subcellular location is the plastid. It is found in the chloroplast. One of the primary rRNA binding proteins, it binds directly to 16S rRNA where it nucleates assembly of the head domain of the 30S subunit. The chain is Small ribosomal subunit protein uS7c (rps7) from Butomus umbellatus (Flowering rush).